Consider the following 708-residue polypeptide: Lactotransferrin (708 aa).

The signal sequence occupies residues 1–19 (MKLFFPALLSLGALGLCLA). Transferrin-like domains are found at residues 25 to 352 (VRWC…GLRE) and 364 to 693 (VVWC…KLRR). 2 disulfide bridges follow: Cys28–Cys64 and Cys38–Cys55. The interval 44-51 (RMKKVRGP) is interaction with E.coli ompC. Asp79 contributes to the Fe(3+) binding site. The active site involves Lys92. Tyr111 provides a ligand contact to Fe(3+). 5 cysteine pairs are disulfide-bonded: Cys134/Cys217, Cys176/Cys192, Cys179/Cys202, Cys189/Cys200, and Cys250/Cys264. Thr136, Arg140, Ala142, and Gly143 together coordinate hydrogencarbonate. Tyr211 provides a ligand contact to Fe(3+). A glycan (N-linked (GlcNAc...) asparagine) is linked at Asn252. Position 272 (His272) interacts with Fe(3+). Residue Ser278 is the Nucleophile of the active site. 2 disulfides stabilise this stretch: Cys367–Cys399 and Cys377–Cys390. An N-linked (GlcNAc...) asparagine glycan is attached at Asn385. Asp414 and Tyr452 together coordinate Fe(3+). Cystine bridges form between Cys424-Cys703, Cys444-Cys666, Cys476-Cys551, Cys500-Cys694, Cys510-Cys524, Cys521-Cys534, Cys592-Cys606, and Cys644-Cys649. The hydrogencarbonate site is built by Thr478, Arg482, Ala484, and Gly485. A glycan (N-linked (GlcNAc...) asparagine) is linked at Asn537. Tyr545 lines the Fe(3+) pocket. Asn594 carries N-linked (GlcNAc...) asparagine glycosylation. His614 is a Fe(3+) binding site.

Belongs to the transferrin family. As to quaternary structure, monomer. Found in a complex with LTF, CLU, EPPIN and SEMG1. Interacts with E.coli outer membrane protein C (OmpC). Found in a complex with MPO and LTF; interacts directly with CP, allows Fe(3+) incorporation into LTF and activation of CP ferroxidase activity. In terms of processing, poly-N-acetyllactosaminic carbohydrate moiety seems to be needed for TLR4 activation.

The protein localises to the secreted. It localises to the cytoplasmic granule. Its function is as follows. Transferrins are iron binding transport proteins which can bind two Fe(3+) ions in association with the binding of an anion, usually bicarbonate. In terms of biological role, major iron-binding and multifunctional protein found in exocrine fluids such as breast milk and mucosal secretions. Has antimicrobial activity, which depends on the extracellular cation concentration. Antimicrobial properties include bacteriostasis, which is related to its ability to sequester free iron and thus inhibit microbial growth, as well as direct bactericidal properties leading to the release of lipopolysaccharides from the bacterial outer membrane. Can also prevent bacterial biofilm development in P.aeruginosa infection. Has weak antifungal activity against C.albicans. Has anabolic, differentiating and anti-apoptotic effects on osteoblasts and can also inhibit osteoclastogenesis, possibly playing a role in the regulation of bone growth. Promotes binding of species C adenoviruses to epithelial cells, promoting adenovirus infection. Can inhibit papillomavirus infections. Stimulates the TLR4 signaling pathway leading to NF-kappa-B activation and subsequent pro-inflammatory cytokine production while also interfering with the lipopolysaccharide (LPS)-stimulated TLR4 signaling. Inhibits neutrophil granulocyte migration to sites of apoptosis, when secreted by apoptotic cells. Stimulates VEGFA-mediated endothelial cell migration and proliferation. Binds heparin, chondroitin sulfate and possibly other glycosaminoglycans (GAGs). Also binds specifically to pneumococcal surface protein A (PspA), the lipid A portion of bacterial lipopolysaccharide (LPS), lysozyme and DNA. Lactoferricin binds to the bacterial surface and is crucial for the bactericidal functions. Has some antiviral activity against papillomavirus infection. N-terminal region shows strong antifungal activity against C.albicans. Contains two BBXB heparin-binding consensus sequences that appear to form the predominate functional GAG-binding site. Functionally, the lactotransferrin transferrin-like domain 1 functions as a serine protease of the peptidase S60 family that cuts arginine rich regions. This function contributes to the antimicrobial activity. Shows a preferential cleavage at -Arg-Ser-Arg-Arg-|- and -Arg-Arg-Ser-Arg-|-, and of Z-Phe-Arg-|-aminomethylcoumarin sites. The sequence is that of Lactotransferrin (LTF) from Camelus dromedarius (Dromedary).